The following is an 883-amino-acid chain: Valine--tRNA ligase (883 aa).

The short motif at 52–62 (PNVTGRLHLGH) is the 'HIGH' region element. A 'KMSKS' region motif is present at residues 529–533 (KMSKS). Lys532 contacts ATP. Residues 813-848 (LEGLIDFDKEIKRLENELAKWTKEVERVQKKLSNQG) adopt a coiled-coil conformation.

The protein belongs to the class-I aminoacyl-tRNA synthetase family. ValS type 1 subfamily. In terms of assembly, monomer.

It localises to the cytoplasm. The enzyme catalyses tRNA(Val) + L-valine + ATP = L-valyl-tRNA(Val) + AMP + diphosphate. Functionally, catalyzes the attachment of valine to tRNA(Val). As ValRS can inadvertently accommodate and process structurally similar amino acids such as threonine, to avoid such errors, it has a 'posttransfer' editing activity that hydrolyzes mischarged Thr-tRNA(Val) in a tRNA-dependent manner. The chain is Valine--tRNA ligase from Oceanobacillus iheyensis (strain DSM 14371 / CIP 107618 / JCM 11309 / KCTC 3954 / HTE831).